We begin with the raw amino-acid sequence, 272 residues long: Plastid division protein PDV1 (272 aa).

Residues 1-206 (MGEMEIEEIE…KRALGFNHVK (206 aa)) lie on the Cytoplasmic side of the membrane. The tract at residues 40-61 (KPSNRSEKRKNPHGNSGEDKRP) is disordered. Residues 78–102 (IQEAKSLNAIRTALENLEDQLEFFH) adopt a coiled-coil conformation. A helical transmembrane segment spans residues 207-225 (GVLGNAAIFAISVVAMLHL). Residues 226-272 (HQVATSEHHLQKKEDRFYRSQQRKTYGRDKSSADRSLDHLDVMMARG) lie on the Chloroplast intermembrane side of the membrane.

As to quaternary structure, interacts (via C-terminus) with CDP1/PARC6 (via C-terminus). Interacts with ARC5/DRP5B. In terms of tissue distribution, expressed in young developing leaves, root tips, shoot apices, and flower buds (sepals, petals, stamens, and pistils), but not in developed tissues.

It localises to the plastid. The protein resides in the chloroplast outer membrane. Its function is as follows. Component of the plastid division machinery. Required to mediate the dissociation of ARC5/DRP5B from plastid outer envelope membranes (OEMs) at the midplastid constriction site in the cytoplasm, thus triggering ARC5/DRP5B ring turnover at the chloroplast division site. Binding to phosphatidylinositol 4-phosphate (PI4P) modulates negatively chloroplast division. This chain is Plastid division protein PDV1, found in Arabidopsis thaliana (Mouse-ear cress).